A 210-amino-acid polypeptide reads, in one-letter code: Ribonuclease HII (210 aa).

The 192-residue stretch at 16 to 207 folds into the RNase H type-2 domain; it reads AIVVGVDEVG…VKKCIISTKN (192 aa). A divalent metal cation-binding residues include aspartate 22, glutamate 23, and aspartate 116.

Belongs to the RNase HII family. It depends on Mn(2+) as a cofactor. Requires Mg(2+) as cofactor.

The protein localises to the cytoplasm. It carries out the reaction Endonucleolytic cleavage to 5'-phosphomonoester.. Its function is as follows. Endonuclease that specifically degrades the RNA of RNA-DNA hybrids. In Anaplasma phagocytophilum (strain HZ), this protein is Ribonuclease HII.